The sequence spans 310 residues: Oxygen-dependent coproporphyrinogen-III oxidase (310 aa).

S92 lines the substrate pocket. A divalent metal cation is bound by residues H96 and H106. Residue H106 is the Proton donor of the active site. 108-110 lines the substrate pocket; it reads NVR. Positions 145 and 175 each coordinate a divalent metal cation. The segment at 240–275 is important for dimerization; sequence YVEFNLIWDRGTLFGLQSGGRTESILMSMPPLARWE. Residue 258–260 participates in substrate binding; sequence GGR.

Belongs to the aerobic coproporphyrinogen-III oxidase family. As to quaternary structure, homodimer. Requires a divalent metal cation as cofactor.

The protein resides in the cytoplasm. It carries out the reaction coproporphyrinogen III + O2 + 2 H(+) = protoporphyrinogen IX + 2 CO2 + 2 H2O. It functions in the pathway porphyrin-containing compound metabolism; protoporphyrin-IX biosynthesis; protoporphyrinogen-IX from coproporphyrinogen-III (O2 route): step 1/1. Involved in the heme biosynthesis. Catalyzes the aerobic oxidative decarboxylation of propionate groups of rings A and B of coproporphyrinogen-III to yield the vinyl groups in protoporphyrinogen-IX. This Pectobacterium carotovorum subsp. carotovorum (strain PC1) protein is Oxygen-dependent coproporphyrinogen-III oxidase.